Reading from the N-terminus, the 131-residue chain is Putative protein PTGES3L (131 aa).

Residues 3-91 (RQPARTLWYD…KEKVAWPRLT (89 aa)) enclose the CS domain.

It belongs to the p23/wos2 family.

The protein is Putative protein PTGES3L (Ptges3l) of Mus musculus (Mouse).